A 275-amino-acid polypeptide reads, in one-letter code: Methylglyoxal reductase DkgA (275 aa).

Residue Tyr-51 is the Proton donor of the active site. Residue His-107 participates in substrate binding. 187 to 241 (SPLAQGGKGVFDQKVIRDLADKYGKTPAQIVIRWHLDSGLVVIPKSVTPSRIAEN) serves as a coordination point for NADP(+).

This sequence belongs to the aldo/keto reductase family. Monomer.

It localises to the cytoplasm. It catalyses the reaction hydroxyacetone + NADP(+) = methylglyoxal + NADPH + H(+). The enzyme catalyses a primary alcohol + NADP(+) = an aldehyde + NADPH + H(+). It carries out the reaction 2-dehydro-L-idonate + NADP(+) = 2,5-didehydro-D-gluconate + NADPH + H(+). Functionally, aldo-keto reductase that significantly contributes to cellular methylglyoxal detoxification by catalyzing the NADPH-dependent conversion of methylglyoxal to acetol. It also exhibits fairly high activity with glyoxal. Shows broad specificity and can use aromatic aldehydes such as 4-nitrobenzaldehyde, 3-nitrobenzaldehyde and benzaldehyde, and phenylglyoxal. Shows beta-keto ester reductase activity toward ethyl acetoacetate and a variety of 2-substituted derivatives. Also catalyzes the reduction of 2,5-diketo-D-gluconic acid (25DKG) to 2-keto-L-gulonic acid (2KLG) and could be involved in ketogluconate metabolism. However, the specific activity of the enzyme toward 2,5-diketo-D-gluconate was reported to be almost 400-fold lower than its activity toward methylglyoxal. Can catalyze in vitro the NADPH-dependent reduction of furfural, a natural product of lignocellulosic decomposition, to the less toxic product, furfuryl alcohol. However, it is unlikely that furfural is a physiological substrate. This is Methylglyoxal reductase DkgA from Escherichia coli (strain K12).